A 609-amino-acid polypeptide reads, in one-letter code: Major facilitator superfamily domain-containing protein 6-like protein A (609 aa).

A run of 2 helical transmembrane segments spans residues 41 to 61 (LGLG…VHLL) and 78 to 98 (FFIM…AYYP). Residues 201–241 (SGKAQKVMSSKSAASNSKQRSSLNNHTSPYATHPNVSHHPS) form a disordered region. Positions 207–230 (VMSSKSAASNSKQRSSLNNHTSPY) are enriched in polar residues. 9 consecutive transmembrane segments (helical) span residues 265 to 285 (IFLI…PLEW), 307 to 327 (LWIW…FLVD), 340 to 360 (VFFH…LSTL), 388 to 408 (IVLT…TQNF), 420 to 440 (ELYM…LYFF), 452 to 472 (WMVA…SFLW), 475 to 495 (WSVL…WWAI), 513 to 535 (LALR…GFII), and 541 to 561 (AVLY…FLLV).

It belongs to the major facilitator superfamily. MFSD6 family.

Its subcellular location is the membrane. The chain is Major facilitator superfamily domain-containing protein 6-like protein A (mfsd6l-a) from Xenopus laevis (African clawed frog).